We begin with the raw amino-acid sequence, 111 residues long: MLVLVMVVLFTLVLLFVFYIGNFVLSCKDFYKNKISSFECGFVSIGKIQNSFSIHFFIMMLMFVIFDLEVVMFLGILVSDLNSLISFFMLLMFIFGGFYMEWWYGKLVWLI.

The next 3 membrane-spanning stretches (helical) occupy residues 1–21 (MLVL…FYIG), 56–76 (FFIM…FLGI), and 84–104 (LISF…EWWY).

Belongs to the complex I subunit 3 family.

The protein resides in the mitochondrion membrane. The enzyme catalyses a ubiquinone + NADH + 5 H(+)(in) = a ubiquinol + NAD(+) + 4 H(+)(out). In terms of biological role, core subunit of the mitochondrial membrane respiratory chain NADH dehydrogenase (Complex I) that is believed to belong to the minimal assembly required for catalysis. Complex I functions in the transfer of electrons from NADH to the respiratory chain. The immediate electron acceptor for the enzyme is believed to be ubiquinone. The polypeptide is NADH-ubiquinone oxidoreductase chain 3 (ND3) (Ascaris suum (Pig roundworm)).